The sequence spans 471 residues: MSVLKEYRTVSEVVGPLMIVDQVAGVHYNELVDITLHNGERRKGQVLEVQGDKAMVQLFEGSTGINLAKTKVRFTGHSLELAVSEDMVGRIFDGMGQPIDGGPELIPEKYLDIDGQAINPVARDYPDEFIQTGISAIDHLNTLVRGQKLPVFSGSGLPHNELAAQIARQATVLNSDDNFAVVFAAMGITFEEAEFFMNDLRETGAIDRSVLFINLANDPAIERIATPRIALTTAEYLAYEKGMHVLVIMTDMTNYCEALREVSAARREVPGRRGYPGYLYTNLSTLYERAGRLIGKKGSVTQIPILTMPEDDITHPIPDLTGYITEGQIILSQELYKNGFRPPINVLPSLSRLKDKGSGEGKTRQDHAATMNQLFAAYAQGKQAKELAVVLGESALSETDKLYVAFTNRFEEEYINQGFYTNRSIEESLDLGWELLSILPRTELKRIKDDMLDRYLPKADTTMTKVFVAND.

It belongs to the ATPase alpha/beta chains family.

Its function is as follows. Produces ATP from ADP in the presence of a proton gradient across the membrane. The V-type beta chain is a regulatory subunit. The sequence is that of V-type ATP synthase beta chain from Streptococcus pyogenes serotype M49 (strain NZ131).